The following is a 201-amino-acid chain: Troponin I (201 aa).

A1 carries the post-translational modification N-acetylalanine. Positions 1–33 (ADKAKAAEEAKKKQDDIDRKKAEVRKRLEEQSL) are enriched in basic and acidic residues. Residues 1-45 (ADKAKAAEEAKKKQDDIDRKKAEVRKRLEEQSLKKQKKGFMTPER) are disordered. The interval 108 to 117 (IESDKYDVEL) is troponin T-interaction. Residues 135 to 148 (DLRGKFIKPTLKKV) are actin-binding. Residues K142 and K146 each carry the N6,N6,N6-trimethyllysine modification. A disordered region spans residues 182–201 (EDDKGATEGDGPAAEEVAAE).

The protein belongs to the troponin I family.

Troponin I is the actomyosin ATPase inhibitory subunit present in the thin filament regulatory complex. The chain is Troponin I from Astacus leptodactylus (Turkish narrow-clawed crayfish).